The sequence spans 775 residues: 5-methyltetrahydropteroyltriglutamate--homocysteine methyltransferase (775 aa).

5-methyltetrahydropteroyltri-L-glutamate-binding positions include 16 to 19 (REMK) and lysine 115. L-homocysteine is bound by residues 435–437 (IGS) and glutamate 488. L-methionine-binding positions include 435 to 437 (IGS) and glutamate 488. Residues 519–520 (RC) and tryptophan 565 contribute to the 5-methyltetrahydropteroyltri-L-glutamate site. Aspartate 603 contacts L-homocysteine. Residue aspartate 603 coordinates L-methionine. Residue glutamate 609 coordinates 5-methyltetrahydropteroyltri-L-glutamate. 3 residues coordinate Zn(2+): histidine 645, cysteine 647, and glutamate 669. Histidine 698 functions as the Proton donor in the catalytic mechanism. Position 730 (cysteine 730) interacts with Zn(2+).

Belongs to the vitamin-B12 independent methionine synthase family. It depends on Zn(2+) as a cofactor.

The catalysed reaction is 5-methyltetrahydropteroyltri-L-glutamate + L-homocysteine = tetrahydropteroyltri-L-glutamate + L-methionine. It functions in the pathway amino-acid biosynthesis; L-methionine biosynthesis via de novo pathway; L-methionine from L-homocysteine (MetE route): step 1/1. In terms of biological role, catalyzes the transfer of a methyl group from 5-methyltetrahydrofolate to homocysteine resulting in methionine formation. This is 5-methyltetrahydropteroyltriglutamate--homocysteine methyltransferase from Coxiella burnetii (strain CbuG_Q212) (Coxiella burnetii (strain Q212)).